The primary structure comprises 294 residues: Cytidine deaminase (294 aa).

2 CMP/dCMP-type deaminase domains span residues 48-168 and 186-294; these read DDDA…FGPR and LKGD…VTLA. 89–91 provides a ligand contact to substrate; the sequence is NME. His-102 contacts Zn(2+). Residue Glu-104 is the Proton donor of the active site. Residues Cys-129 and Cys-132 each contribute to the Zn(2+) site.

Belongs to the cytidine and deoxycytidylate deaminase family. Homodimer. Zn(2+) is required as a cofactor.

It carries out the reaction cytidine + H2O + H(+) = uridine + NH4(+). The enzyme catalyses 2'-deoxycytidine + H2O + H(+) = 2'-deoxyuridine + NH4(+). In terms of biological role, this enzyme scavenges exogenous and endogenous cytidine and 2'-deoxycytidine for UMP synthesis. This is Cytidine deaminase from Cronobacter sakazakii (strain ATCC BAA-894) (Enterobacter sakazakii).